The primary structure comprises 252 residues: tRNA (guanine-N(1)-)-methyltransferase (252 aa).

S-adenosyl-L-methionine is bound by residues glycine 113 and 133–138 (LGDYVL).

This sequence belongs to the RNA methyltransferase TrmD family. As to quaternary structure, homodimer.

Its subcellular location is the cytoplasm. The enzyme catalyses guanosine(37) in tRNA + S-adenosyl-L-methionine = N(1)-methylguanosine(37) in tRNA + S-adenosyl-L-homocysteine + H(+). Specifically methylates guanosine-37 in various tRNAs. The protein is tRNA (guanine-N(1)-)-methyltransferase of Stenotrophomonas maltophilia (strain R551-3).